The primary structure comprises 486 residues: Putative protease Do-like 13 (486 aa).

Residues 44–229 (KINTFSSKPN…IPAPVVKHFI (186 aa)) are serine protease. Residues His83, Asp114, and Ser192 each act as charge relay system in the active site. The 94-residue stretch at 241-334 (FCSLNLSYQH…TILLKILREG (94 aa)) folds into the PDZ domain.

It belongs to the peptidase S1C family.

Putative serine protease. This is Putative protease Do-like 13 (DEGP13) from Arabidopsis thaliana (Mouse-ear cress).